The sequence spans 456 residues: Chordin-like protein 1 (456 aa).

The signal sequence occupies residues 1-27 (MRKKWKMGGMKYIFSLLFFLLLEGGKT). VWFC domains lie at 35-100 (TYCM…PRCP) and 113-179 (KSCE…RVCR). Asparagine 118 carries N-linked (GlcNAc...) asparagine glycosylation. Positions 179–181 (RGD) match the Cell attachment site motif. Positions 202-223 (ARHSYHRSHYDPPPSRQAGGLS) are disordered. Residues 258–323 (QVCVSNGKTY…IDGKCCKVCP (66 aa)) enclose the VWFC 3 domain. The N-linked (GlcNAc...) asparagine glycan is linked to asparagine 291.

In terms of tissue distribution, expressed in the developing cornea and in the eye anterior segment in addition to the retina. Differentially expressed in the fetal brain. There is high expression in cerebellum and neocortex. Expressed in retinal pericytes.

The protein localises to the secreted. Functionally, antagonizes the function of BMP4 by binding to it and preventing its interaction with receptors. Alters the fate commitment of neural stem cells from gliogenesis to neurogenesis. Contributes to neuronal differentiation of neural stem cells in the brain by preventing the adoption of a glial fate. May play a crucial role in dorsoventral axis formation. May play a role in embryonic bone formation. May also play an important role in regulating retinal angiogenesis through modulation of BMP4 actions in endothelial cells. Plays a role during anterior segment eye development. This Homo sapiens (Human) protein is Chordin-like protein 1 (CHRDL1).